Reading from the N-terminus, the 962-residue chain is SH3 domain-binding protein 4 (962 aa).

The region spanning 55 to 114 (GNAKEVIAIKDYCPNNFTTLKFSKGDHLYVLDTSGGEWWYAHNTTEMGYIPSSYVQPLNY) is the SH3 1 domain. A phosphoserine mark is found at Ser-131, Ser-245, Ser-250, Ser-278, and Ser-295. The ZU5 domain maps to 316 to 453 (TNIVCKLDSS…LEPCMYLAIV (138 aa)). Ser-636 is modified (phosphoserine). Residues 653–723 (SSLKFGKLLK…HTKNVLVVGK (71 aa)) form the SH3 2 domain.

In terms of assembly, homodimer or homooligomer. Interacts with DNM2, EPS15, clathrin, the adapter protein complex 2/AP-2 and TFRC. Interacts with the Rag GTPases RRAGA, RRAGB, RRAGC and RRAGD; the interaction is most probably direct, preferentially occurs with their inactive GDP-bound form and is negatively regulated by amino acids. In terms of processing, phosphorylated upon EGF stimulation. Phosphorylation prevents interaction with DNM2.

It localises to the membrane. The protein resides in the clathrin-coated pit. Its subcellular location is the cytoplasmic vesicle. It is found in the clathrin-coated vesicle. The protein localises to the nucleus. May function in transferrin receptor internalization at the plasma membrane through a cargo-specific control of clathrin-mediated endocytosis. Alternatively, may act as a negative regulator of the amino acid-induced TOR signaling by inhibiting the formation of active Rag GTPase complexes. Preferentially binds inactive Rag GTPase complexes and prevents their interaction with the mTORC1 complex inhibiting its relocalization to lysosomes and its activation. Thereby, may indirectly regulate cell growth, proliferation and autophagy. The chain is SH3 domain-binding protein 4 (Sh3bp4) from Mus musculus (Mouse).